Consider the following 489-residue polypeptide: Cytochrome P450 2C3 (489 aa).

Cysteine 434 provides a ligand contact to heme.

The protein belongs to the cytochrome P450 family. Requires heme as cofactor.

It localises to the endoplasmic reticulum membrane. The protein localises to the microsome membrane. It carries out the reaction an organic molecule + reduced [NADPH--hemoprotein reductase] + O2 = an alcohol + oxidized [NADPH--hemoprotein reductase] + H2O + H(+). Functionally, cytochromes P450 are a group of heme-thiolate monooxygenases. In liver microsomes, this enzyme is involved in an NADPH-dependent electron transport pathway. It oxidizes a variety of structurally unrelated compounds, including steroids, fatty acids, and xenobiotics. In Oryctolagus cuniculus (Rabbit), this protein is Cytochrome P450 2C3 (CYP2C3).